The sequence spans 342 residues: UDP-N-acetylglucosamine--N-acetylmuramyl-(pentapeptide) pyrophosphoryl-undecaprenol N-acetylglucosamine transferase (342 aa).

UDP-N-acetyl-alpha-D-glucosamine is bound by residues 10 to 12 (TGG), Asn-124, Ser-177, and Gln-275.

It belongs to the glycosyltransferase 28 family. MurG subfamily.

The protein resides in the cell inner membrane. The catalysed reaction is di-trans,octa-cis-undecaprenyl diphospho-N-acetyl-alpha-D-muramoyl-L-alanyl-D-glutamyl-meso-2,6-diaminopimeloyl-D-alanyl-D-alanine + UDP-N-acetyl-alpha-D-glucosamine = di-trans,octa-cis-undecaprenyl diphospho-[N-acetyl-alpha-D-glucosaminyl-(1-&gt;4)]-N-acetyl-alpha-D-muramoyl-L-alanyl-D-glutamyl-meso-2,6-diaminopimeloyl-D-alanyl-D-alanine + UDP + H(+). Its pathway is cell wall biogenesis; peptidoglycan biosynthesis. Cell wall formation. Catalyzes the transfer of a GlcNAc subunit on undecaprenyl-pyrophosphoryl-MurNAc-pentapeptide (lipid intermediate I) to form undecaprenyl-pyrophosphoryl-MurNAc-(pentapeptide)GlcNAc (lipid intermediate II). This chain is UDP-N-acetylglucosamine--N-acetylmuramyl-(pentapeptide) pyrophosphoryl-undecaprenol N-acetylglucosamine transferase, found in Campylobacter jejuni subsp. jejuni serotype O:6 (strain 81116 / NCTC 11828).